A 619-amino-acid chain; its full sequence is 1-deoxy-D-xylulose-5-phosphate synthase (619 aa).

Residues His-80 and 121 to 123 each bind thiamine diphosphate; that span reads GHS. Residue Asp-152 coordinates Mg(2+). Thiamine diphosphate-binding positions include 153 to 154, Asn-181, Tyr-288, and Glu-370; that span reads GA. Residue Asn-181 participates in Mg(2+) binding.

It belongs to the transketolase family. DXPS subfamily. As to quaternary structure, homodimer. Mg(2+) is required as a cofactor. It depends on thiamine diphosphate as a cofactor.

The catalysed reaction is D-glyceraldehyde 3-phosphate + pyruvate + H(+) = 1-deoxy-D-xylulose 5-phosphate + CO2. It participates in metabolic intermediate biosynthesis; 1-deoxy-D-xylulose 5-phosphate biosynthesis; 1-deoxy-D-xylulose 5-phosphate from D-glyceraldehyde 3-phosphate and pyruvate: step 1/1. Functionally, catalyzes the acyloin condensation reaction between C atoms 2 and 3 of pyruvate and glyceraldehyde 3-phosphate to yield 1-deoxy-D-xylulose-5-phosphate (DXP). This chain is 1-deoxy-D-xylulose-5-phosphate synthase, found in Yersinia pseudotuberculosis serotype I (strain IP32953).